We begin with the raw amino-acid sequence, 128 residues long: Cholecystokinin B (128 aa).

Residues 1–20 (MCSGVCICLLLAMLSASSKA) form the signal peptide. A propeptide spanning residues 21–108 (HQATGSLGED…FDQSHRINDR (88 aa)) is cleaved from the precursor. The disordered stretch occupies residues 47 to 67 (YARASSAGQKKSFQRTDGDQR). Residue tyrosine 110 is modified to Sulfotyrosine. Phenylalanine 116 carries the phenylalanine amide modification. A propeptide spanning residues 120-128 (SAEEYEYSS) is cleaved from the precursor.

This sequence belongs to the gastrin/cholecystokinin family. The precursor is cleaved by proteases to produce a number of active cholecystokinins. As to expression, brain and gastrointestinal tract.

The protein localises to the secreted. The protein is Cholecystokinin B (cck-b) of Xenopus laevis (African clawed frog).